Reading from the N-terminus, the 785-residue chain is Phenylalanine--tRNA ligase beta subunit (785 aa).

The region spanning 39 to 147 is the tRNA-binding domain; that stretch reads FPIPRGVVFA…DALPPGTPLS (109 aa). In terms of domain architecture, B5 spans 399–474; it reads KPPEAIPFRP…RIQGYETIPL (76 aa). Asp452, Asp458, Glu461, and Glu462 together coordinate Mg(2+). Residues 688 to 780 form the FDX-ACB domain; it reads SRHPAAFRDL…ALRARGFGLR (93 aa).

The protein belongs to the phenylalanyl-tRNA synthetase beta subunit family. Type 1 subfamily. As to quaternary structure, tetramer of two alpha and two beta subunits. It depends on Mg(2+) as a cofactor.

The protein localises to the cytoplasm. It catalyses the reaction tRNA(Phe) + L-phenylalanine + ATP = L-phenylalanyl-tRNA(Phe) + AMP + diphosphate + H(+). This is Phenylalanine--tRNA ligase beta subunit (pheT) from Thermus thermophilus (strain ATCC 27634 / DSM 579 / HB8).